The primary structure comprises 805 residues: Na(+)/H(+) antiporter subunit A1 (805 aa).

The next 20 membrane-spanning stretches (helical) occupy residues 1–21, 30–50, 79–99, 117–137, 166–186, 201–221, 226–246, 265–285, 300–320, 337–357, 377–397, 427–447, 480–500, 531–551, 591–611, 623–643, 646–666, 671–691, 707–727, and 766–786; these read MSLL…IPFV, LGWF…SYIS, LGLL…LYSI, LFMG…LYLF, MLVT…LSIA, EIQT…GAMT, FPFY…SAYL, IFAV…ITLF, ILAF…GVGA, FTAA…LFMI, LTIM…MAGI, LGIL…VYSI, ILAI…GSII, LGIY…IYLL, LVII…VTPF, PFEL…IFAK, LFSI…FIFF, LALT…LCFY, LVNI…GLIA, and TLFE…MIKL.

This sequence belongs to the CPA3 antiporters (TC 2.A.63) subunit A family. In terms of assembly, may form a heterooligomeric complex that consists of seven subunits: mnhA1, mnhB1, mnhC1, mnhD1, mnhE1, mnhF1 and mnhG1.

The protein resides in the cell membrane. Its function is as follows. Mnh complex is a Na(+)/H(+) antiporter involved in Na(+) excretion. The polypeptide is Na(+)/H(+) antiporter subunit A1 (mnhA1) (Staphylococcus saprophyticus subsp. saprophyticus (strain ATCC 15305 / DSM 20229 / NCIMB 8711 / NCTC 7292 / S-41)).